The chain runs to 94 residues: Sapecin (94 aa).

A signal peptide spans 1–23; the sequence is MKSFIVLAVTLCLAAFFMGQSVA. The propeptide occupies 24–54; it reads SPAAAAEESKFVDGLHALKTIEPELHGRYKR. Cystine bridges form between C57–C84, C70–C90, and C74–C92.

The protein belongs to the invertebrate defensin family. Type 1 subfamily. In terms of tissue distribution, hemocytes and fat body.

The protein localises to the secreted. Sapecins, which are potent bactericidal proteins, are produced in response to injury. Sapecin is cytotoxic to Gram-positive bacteria, and to a lesser extent against Gram-negative bacteria. In Sarcophaga peregrina (Flesh fly), this protein is Sapecin.